The primary structure comprises 196 residues: UPF0319 protein VV0948 (196 aa).

A signal peptide spans 1 to 19 (MKKMMILSALALFSSSLFA).

Belongs to the UPF0319 family.

This Vibrio vulnificus (strain YJ016) protein is UPF0319 protein VV0948.